We begin with the raw amino-acid sequence, 575 residues long: GBF-interacting protein 1-like (575 aa).

2 disordered regions span residues Ser-66–Asp-171 and Ser-229–Ser-296. Polar residues-rich tracts occupy residues Phe-90 to Asn-102, Thr-115 to Lys-138, and Ile-161 to Asp-171. Over residues Ala-268–Tyr-281 the composition is skewed to basic and acidic residues.

The protein belongs to the GIP1 family. In terms of tissue distribution, expressed in roots, leaves, stems and flowers.

Its subcellular location is the nucleus. Its function is as follows. May act as a transcriptional coactivator of LOB domain-containing proteins. In Arabidopsis thaliana (Mouse-ear cress), this protein is GBF-interacting protein 1-like.